A 316-amino-acid chain; its full sequence is BTB/POZ domain-containing adapter for CUL3-mediated RhoA degradation protein 2 (316 aa).

Positions 28–96 (KYVQLNVGGS…LRDDTVTLPQ (69 aa)) constitute a BTB domain. The span at 268-279 (EATSRSRSQASP) shows a compositional bias: polar residues. The segment at 268 to 287 (EATSRSRSQASPSEDEDTFE) is disordered. Phosphoserine is present on Ser278. Residue Ser280 is modified to Phosphoserine; by CK2.

Belongs to the BACURD family. Component of the BCR(TNFAIP1) E3 ubiquitin ligase complex, at least composed of CUL3, TNFAIP1/BACURD2 and RBX1. Interacts with RHOA; with a preference for RhoA-GDP. Interacts with RHOB. Interacts with CSNK2B. Interacts with PCNA. Post-translationally, phosphorylation at Ser-280 by CK2 facilitates the nucleus localization and increases interaction with PCNA.

The protein resides in the cytoplasm. Its subcellular location is the nucleus. It localises to the endosome. It functions in the pathway protein modification; protein ubiquitination. Its function is as follows. Substrate-specific adapter of a BCR (BTB-CUL3-RBX1) E3 ubiquitin-protein ligase complex involved in regulation of cytoskeleton structure. The BCR(TNFAIP1) E3 ubiquitin ligase complex mediates the ubiquitination of RHOA, leading to its degradation by the proteasome, thereby regulating the actin cytoskeleton and cell migration. Its interaction with RHOB may regulate apoptosis. May enhance the PCNA-dependent DNA polymerase delta activity. The chain is BTB/POZ domain-containing adapter for CUL3-mediated RhoA degradation protein 2 (Tnfaip1) from Rattus norvegicus (Rat).